We begin with the raw amino-acid sequence, 144 residues long: Small ribosomal subunit protein bS6 (144 aa).

Residues 97–144 (EEGPSAMMRKADRDRERDERGGPREGGFRSERGPRRPREEETTASVEE) are disordered. Positions 105–137 (RKADRDRERDERGGPREGGFRSERGPRRPREEE) are enriched in basic and acidic residues.

The protein belongs to the bacterial ribosomal protein bS6 family.

Functionally, binds together with bS18 to 16S ribosomal RNA. This Afipia carboxidovorans (strain ATCC 49405 / DSM 1227 / KCTC 32145 / OM5) (Oligotropha carboxidovorans) protein is Small ribosomal subunit protein bS6.